Reading from the N-terminus, the 309-residue chain is Mannitol-1-phosphatase (309 aa).

The active-site Tele-phosphohistidine intermediate is His82. Glu166 serves as the catalytic Proton donor/acceptor.

Belongs to the phosphoglycerate mutase family.

The catalysed reaction is D-mannitol 1-phosphate + H2O = D-mannitol + phosphate. With respect to regulation, by diethyl pyrocarbonate (DEPC). Functionally, key enzyme for mannitol biosynthesis. This is Mannitol-1-phosphatase from Eimeria tenella (Coccidian parasite).